The primary structure comprises 404 residues: Cysteine desulfurase IscS (404 aa).

Residues 75–76, Asn-155, Gln-183, and 203–205 contribute to the pyridoxal 5'-phosphate site; these read AT and SAH. Lys-206 is subject to N6-(pyridoxal phosphate)lysine. Thr-243 serves as a coordination point for pyridoxal 5'-phosphate. The active-site Cysteine persulfide intermediate is the Cys-328. Position 328 (Cys-328) interacts with [2Fe-2S] cluster.

This sequence belongs to the class-V pyridoxal-phosphate-dependent aminotransferase family. NifS/IscS subfamily. Homodimer. Forms a heterotetramer with IscU, interacts with other sulfur acceptors. The cofactor is pyridoxal 5'-phosphate.

It localises to the cytoplasm. The catalysed reaction is (sulfur carrier)-H + L-cysteine = (sulfur carrier)-SH + L-alanine. The protein operates within cofactor biosynthesis; iron-sulfur cluster biosynthesis. Master enzyme that delivers sulfur to a number of partners involved in Fe-S cluster assembly, tRNA modification or cofactor biosynthesis. Catalyzes the removal of elemental sulfur atoms from cysteine to produce alanine. Functions as a sulfur delivery protein for Fe-S cluster synthesis onto IscU, an Fe-S scaffold assembly protein, as well as other S acceptor proteins. In Aeromonas salmonicida (strain A449), this protein is Cysteine desulfurase IscS.